The following is a 226-amino-acid chain: 7-cyano-7-deazaguanine synthase (226 aa).

8–18 (LSGGLDSTTTL) serves as a coordination point for ATP. Zn(2+) contacts are provided by Cys188, Cys198, Cys201, and Cys204.

The protein belongs to the QueC family. The cofactor is Zn(2+).

The catalysed reaction is 7-carboxy-7-deazaguanine + NH4(+) + ATP = 7-cyano-7-deazaguanine + ADP + phosphate + H2O + H(+). It participates in purine metabolism; 7-cyano-7-deazaguanine biosynthesis. Catalyzes the ATP-dependent conversion of 7-carboxy-7-deazaguanine (CDG) to 7-cyano-7-deazaguanine (preQ(0)). The protein is 7-cyano-7-deazaguanine synthase of Nitrosomonas eutropha (strain DSM 101675 / C91 / Nm57).